The primary structure comprises 338 residues: Anthranilate phosphoribosyltransferase (338 aa).

5-phospho-alpha-D-ribose 1-diphosphate-binding positions include glycine 81, 84–85 (GD), threonine 89, 91–94 (NVST), 109–117 (KHGNRALSS), and alanine 121. Glycine 81 is an anthranilate binding site. Serine 93 provides a ligand contact to Mg(2+). Asparagine 112 lines the anthranilate pocket. Arginine 167 serves as a coordination point for anthranilate. 2 residues coordinate Mg(2+): aspartate 225 and glutamate 226.

This sequence belongs to the anthranilate phosphoribosyltransferase family. Homodimer. Requires Mg(2+) as cofactor.

It catalyses the reaction N-(5-phospho-beta-D-ribosyl)anthranilate + diphosphate = 5-phospho-alpha-D-ribose 1-diphosphate + anthranilate. The protein operates within amino-acid biosynthesis; L-tryptophan biosynthesis; L-tryptophan from chorismate: step 2/5. In terms of biological role, catalyzes the transfer of the phosphoribosyl group of 5-phosphorylribose-1-pyrophosphate (PRPP) to anthranilate to yield N-(5'-phosphoribosyl)-anthranilate (PRA). This is Anthranilate phosphoribosyltransferase from Chelativorans sp. (strain BNC1).